Reading from the N-terminus, the 2925-residue chain is Otogelin (2925 aa).

Positions 1 to 25 (MGVLASALCWLLCVWLPWGEQAAES) are cleaved as a signal peptide. A disordered region spans residues 39-69 (GRSGARGMRNVKGMRNGPAQTRVSSSSSHQE). The segment covering 56–69 (PAQTRVSSSSSHQE) has biased composition (polar residues). The region spanning 102-139 (HRAKCAPSYLFSCFNGGECVHPAFCDCRRFNATGPRCQ) is the EGF-like domain. 5 disulfide bridges follow: Cys-106–Cys-120, Cys-114–Cys-126, Cys-128–Cys-138, Cys-152–Cys-285, and Cys-199–Cys-206. One can recognise a VWFD 1 domain in the interval 150 to 322 (SICRAWGQHH…SWQEQAPNQP (173 aa)). The interval 316-335 (EQAPNQPPGPTTSSLPRPPC) is disordered. Over residues 326 to 335 (TTSSLPRPPC) the composition is skewed to polar residues. One can recognise a VWFD 2 domain in the interval 512–688 (AECSVTGDIH…NSWKTLSACS (177 aa)). Cystine bridges form between Cys-514–Cys-652, Cys-536–Cys-687, and Cys-558–Cys-566. The 65-residue stretch at 780–844 (CEASKEYSPC…ADLCVPRNQC (65 aa)) folds into the TIL domain. Asn-914 carries an N-linked (GlcNAc...) asparagine glycan. The VWFD 3 domain occupies 984–1152 (STCTAYGDRH…SWAAVECPDT (169 aa)). Intrachain disulfides connect Cys-986–Cys-1115 and Cys-1030–Cys-1037. The disordered stretch occupies residues 1476-1540 (LGNETLPPSQ…PVVSPGPTQT (65 aa)). An N-linked (GlcNAc...) asparagine glycan is attached at Asn-1478. The segment covering 1502 to 1528 (PRTPTHRPALTPAAPLTTALNPPVTAT) has biased composition (low complexity). N-linked (GlcNAc...) asparagine glycosylation is present at Asn-1612. Disordered regions lie at residues 1636–1679 (GHGS…HKAV), 1693–1715 (VPQP…AGTA), and 1737–1788 (KGEA…ASLS). A compositionally biased stretch (polar residues) spans 1650 to 1659 (SLTASPSSRP). A compositionally biased stretch (low complexity) spans 1694–1708 (PQPTQAQSASSPSTP). The span at 1751 to 1764 (SPQPHPLPSAPPRP) shows a compositional bias: pro residues. In terms of domain architecture, VWFD 4 spans 2110 to 2289 (CRCSIFPDLS…SWQVPSSLTS (180 aa)). 5 disulfide bridges follow: Cys-2112–Cys-2249, Cys-2840–Cys-2889, Cys-2854–Cys-2903, Cys-2865–Cys-2920, and Cys-2869–Cys-2922. In terms of domain architecture, CTCK spans 2840–2925 (CKKVTIRMTI…EPTDCACQWS (86 aa)).

It belongs to the otogelin family. In terms of processing, N-glycosylated. Not O-glycosylated.

It localises to the apical cell membrane. The protein resides in the secreted. It is found in the extracellular space. In terms of biological role, glycoprotein specific to acellular membranes of the inner ear. May be required for the anchoring of the otoconial membranes and cupulae to the underlying neuroepithelia in the vestibule. May be involved in the organization and/or stabilization of the fibrillar network that compose the tectorial membrane in the cochlea. May play a role in mechanotransduction processes. This chain is Otogelin (OTOG), found in Homo sapiens (Human).